Consider the following 258-residue polypeptide: Acetylglutamate kinase (258 aa).

Substrate is bound by residues 44-45, Arg-66, and Asn-158; that span reads GG. Residues 181–186 and 209–211 each bind ATP; these read DVSGIL and IIT.

This sequence belongs to the acetylglutamate kinase family. ArgB subfamily. As to quaternary structure, homodimer.

Its subcellular location is the cytoplasm. The catalysed reaction is N-acetyl-L-glutamate + ATP = N-acetyl-L-glutamyl 5-phosphate + ADP. It participates in amino-acid biosynthesis; L-arginine biosynthesis; N(2)-acetyl-L-ornithine from L-glutamate: step 2/4. Functionally, catalyzes the ATP-dependent phosphorylation of N-acetyl-L-glutamate. This Klebsiella pneumoniae subsp. pneumoniae (strain ATCC 700721 / MGH 78578) protein is Acetylglutamate kinase.